The sequence spans 2226 residues: DNA polymerase epsilon catalytic subunit A (2226 aa).

The segment at 1240–1265 (RVSKVTSRKRRNGKANNVSDSEEEER) is disordered. Residues C2112, C2115, C2134, and C2137 each coordinate Zn(2+). The segment at 2112–2137 (CDYCNYIRDIDFCRDEQKNIWNCSNC) adopts a CysA-type zinc-finger fold. [4Fe-4S] cluster-binding residues include C2168, C2171, C2183, and C2185. Positions 2168–2185 (CSKCHQIKSDNMSEYCKC) match the CysB motif motif.

Belongs to the DNA polymerase type-B family. As to quaternary structure, heterotetramer. Consists of 4 subunits: POL2, DPB2, DPB3 and DPB4. [4Fe-4S] cluster is required as a cofactor.

Its subcellular location is the nucleus. The enzyme catalyses DNA(n) + a 2'-deoxyribonucleoside 5'-triphosphate = DNA(n+1) + diphosphate. DNA polymerase II participates in chromosomal DNA replication. The polypeptide is DNA polymerase epsilon catalytic subunit A (POL2) (Debaryomyces hansenii (strain ATCC 36239 / CBS 767 / BCRC 21394 / JCM 1990 / NBRC 0083 / IGC 2968) (Yeast)).